A 173-amino-acid polypeptide reads, in one-letter code: Tumor necrosis factor ligand superfamily member 18 (173 aa).

Topologically, residues 1 to 20 are cytoplasmic; sequence MEEMPLRESSPQRAERCKKS. A helical; Signal-anchor for type II membrane protein transmembrane segment spans residues 21-41; that stretch reads WLLCIVALLLMLLCSLGTLIY. The region spanning 40–166 is the THD domain; it reads IYTSLKPTAI…TNTYWGIILM (127 aa). At 42 to 173 the chain is on the extracellular side; that stretch reads TSLKPTAIES…ILMPDLPFIS (132 aa). Cysteine 52 and cysteine 72 form a disulfide bridge. Asparagine 74 carries an N-linked (GlcNAc...) asparagine glycan.

It belongs to the tumor necrosis factor family. In terms of assembly, homotrimer. Homodimer. In terms of processing, N-glycosylated. Detected in immature and mature dendritic cells and in macrophages (at protein level). Detected in spleen, lung, heart, thymus, monocytes, macrophages, B-cells and dendritic cells.

It is found in the cell membrane. Functionally, cytokine that binds to TNFRSF18/AITR/GITR. Regulates T-cell responses. Can function as costimulator and lower the threshold for T-cell activation and T-cell proliferation. Important for interactions between activated T-lymphocytes and endothelial cells. Mediates activation of NF-kappa-B. Triggers increased phosphorylation of STAT1 and up-regulates expression of VCAM1 and ICAM1. Promotes leukocyte adhesion to endothelial cells. Regulates migration of monocytes from the splenic reservoir to sites of inflammation. This Mus musculus (Mouse) protein is Tumor necrosis factor ligand superfamily member 18 (Tnfsf18).